Consider the following 137-residue polypeptide: Large ribosomal subunit protein uL16 (137 aa).

The disordered stretch occupies residues 1 to 22 (MLQPKRTKFRKQQKGRNRGLAH).

This sequence belongs to the universal ribosomal protein uL16 family. As to quaternary structure, part of the 50S ribosomal subunit.

Functionally, binds 23S rRNA and is also seen to make contacts with the A and possibly P site tRNAs. The sequence is that of Large ribosomal subunit protein uL16 from Saccharophagus degradans (strain 2-40 / ATCC 43961 / DSM 17024).